The following is a 476-amino-acid chain: Amino acid permease 3 (476 aa).

The Cytoplasmic portion of the chain corresponds to 1 to 33; that stretch reads MVQNHQTVLAVDMPQTGGSKYLDDDGKNKRTGS. Residues 34–54 traverse the membrane as a helical segment; the sequence is VWTASAHIITAVIGSGVLSLA. The Extracellular segment spans residues 55 to 57; that stretch reads WAT. Residues 58–78 form a helical membrane-spanning segment; the sequence is AQLGWLAGPVVMLLFSAVTYF. The Cytoplasmic segment spans residues 79 to 122; the sequence is TSSLLAACYRSGDPISGKRNYTYMDAVRSNLGGVKVTLCGIVQY. Residues 123–143 traverse the membrane as a helical segment; it reads LNIFGVAIGYTIASAISMMAI. Residues 144-166 lie on the Extracellular side of the membrane; that stretch reads KRSNCFHKSGGKDPCHMNSNPYM. 2 consecutive transmembrane segments (helical) span residues 167-187 and 188-208; these read IAFGLVQILFSQIPDFDQLWW and LSILAAVMSFTYSSAGLALGI. Residues 209–277 are Extracellular-facing; it reads AQVVVNGKVK…EEKTMKKATL (69 aa). Residues 278 to 298 form a helical membrane-spanning segment; sequence VSVSVTTMFYMLCGCMGYAAF. The Cytoplasmic portion of the chain corresponds to 299-300; that stretch reads GD. A helical transmembrane segment spans residues 301-321; that stretch reads LSPGNLLTGFGFYNPYWLLDI. Residues 322 to 324 are Extracellular-facing; the sequence is ANA. The chain crosses the membrane as a helical span at residues 325–345; it reads AIVIHLIGAYQVYCQPLFAFI. At 346-384 the chain is on the cytoplasmic side; it reads EKQASIQFPDSEFIAKDIKIPIPGFKPLRLNVFRLIWRT. The next 2 helical transmembrane spans lie at 385–405 and 406–426; these read VFVIITTVISMLLPFFNDVVG and LLGALGFWPLTVYFPVEMYIA. The Cytoplasmic portion of the chain corresponds to 427–441; sequence QKKIPRWSTRWVCLQ. The chain crosses the membrane as a helical span at residues 442-462; that stretch reads VFSLGCLVVSIAAAAGSIAGV. Residues 463 to 476 lie on the Extracellular side of the membrane; that stretch reads LLDLKSYKPFRSEY.

It belongs to the amino acid/polyamine transporter 2 family. Amino acid/auxin permease (AAAP) (TC 2.A.18.2) subfamily. In terms of tissue distribution, expressed in the root phloem. Detected in stamens, in cotyledons, and in major veins of mature leaves.

It localises to the cell membrane. It is found in the nucleus membrane. Its subcellular location is the endomembrane system. Inhibited by carbonylcyanide m-chlorophenylhydrazone and 2,4-dinitrophenol. Functionally, amino acid-proton symporter. Stereospecific transporter with a broad specificity for GABA, tryptophan and both neutral and basic amino acids. High affinity transport of cationic amino acids. This is Amino acid permease 3 (AAP3) from Arabidopsis thaliana (Mouse-ear cress).